The following is a 145-amino-acid chain: Large ribosomal subunit protein bL19 (145 aa).

It belongs to the bacterial ribosomal protein bL19 family.

Functionally, this protein is located at the 30S-50S ribosomal subunit interface and may play a role in the structure and function of the aminoacyl-tRNA binding site. The protein is Large ribosomal subunit protein bL19 of Brucella abortus (strain S19).